The following is a 239-amino-acid chain: Dolichyldiphosphatase (239 aa).

Residues 1-34 (MNSTAAAINPNPNVIPFDDTYILYDSHDFLSFLS) are Lumenal-facing. A helical transmembrane segment spans residues 35–55 (AYFSLMPILVLAFYLSWFIIT). Residues 56-131 (RELEACIVAF…KIYTSWKNLN (76 aa)) lie on the Cytoplasmic side of the membrane. A helical membrane pass occupies residues 132–152 (FLEKCIFSGALALLSFCVCFS). Topologically, residues 153 to 164 (RVYLHYHNLDQV) are lumenal. Residues 165-185 (IVGFSVGALTGSLYFFIVGII) traverse the membrane as a helical segment. The Cytoplasmic segment spans residues 186 to 239 (RELGLINWFLKLRIVRLFYMTDSYNLAPLTLKENYEAYWKRINQRSFNDKSKRD).

Belongs to the dolichyldiphosphatase family.

Its subcellular location is the endoplasmic reticulum membrane. The enzyme catalyses a di-trans,poly-cis-dolichyl diphosphate + H2O = a di-trans,poly-cis-dolichyl phosphate + phosphate + H(+). It participates in protein modification; protein glycosylation. In terms of biological role, non-essential protein which is required for efficient N-glycosylation. Necessary for maintaining optimal levels of dolichol-linked oligosaccharides. Hydrolyzes dolichyl pyrophosphate at a very high rate and dolichyl monophosphate at a much lower rate. Does not act on phosphatidate. This is Dolichyldiphosphatase (CAX4) from Saccharomyces cerevisiae (strain ATCC 204508 / S288c) (Baker's yeast).